The primary structure comprises 321 residues: Glycerol-3-phosphate phosphatase (321 aa).

Aspartate 34 functions as the Nucleophile in the catalytic mechanism. Mg(2+) is bound by residues aspartate 34, aspartate 36, and aspartate 260. The active-site Proton donor is aspartate 36.

Belongs to the HAD-like hydrolase superfamily. CbbY/CbbZ/Gph/YieH family. As to quaternary structure, homodimer. Mg(2+) is required as a cofactor. In terms of tissue distribution, detected in all tissues including red cells, lymphocytes and cultured fibroblasts (at protein level). The highest activities occur in skeletal muscle and cardiac muscle.

It carries out the reaction O-phospho-L-tyrosyl-[protein] + H2O = L-tyrosyl-[protein] + phosphate. The enzyme catalyses sn-glycerol 1-phosphate + H2O = glycerol + phosphate. It catalyses the reaction sn-glycerol 3-phosphate + H2O = glycerol + phosphate. Glycerol-3-phosphate phosphatase hydrolyzing glycerol-3-phosphate into glycerol. Thereby, regulates the cellular levels of glycerol-3-phosphate a metabolic intermediate of glucose, lipid and energy metabolism. Was also shown to have a 2-phosphoglycolate phosphatase activity and a tyrosine-protein phosphatase activity. However, their physiological relevance is unclear. In vitro, also has a phosphatase activity toward ADP, ATP, GDP and GTP. This chain is Glycerol-3-phosphate phosphatase, found in Homo sapiens (Human).